Here is a 707-residue protein sequence, read N- to C-terminus: MAP kinase-interacting serine/threonine-protein kinase mnk-1 (707 aa).

Positions 1–24 are enriched in polar residues; sequence MFFLDNTDSMTSSSRGITMPNTIS. Disordered regions lie at residues 1–29 and 101–131; these read MFFL…HEDV and RQRE…YVGR. Residues 203–493 form the Protein kinase domain; it reads KLTDEHLGSG…ADQILSHRWL (291 aa). ATP contacts are provided by residues 209–217 and Lys-232; that span reads LGSGAYGSV. Asp-325 acts as the Proton acceptor in catalysis. 2 disordered regions span residues 589–628 and 688–707; these read RSGE…SADD and FEDE…QVNV.

Belongs to the protein kinase superfamily. CAMK Ser/Thr protein kinase family. Requires Mg(2+) as cofactor. In terms of tissue distribution, expressed in pharynx, intestine, vulva and body wall muscles.

Its subcellular location is the nucleus. The protein resides in the cytoplasm. The catalysed reaction is L-seryl-[protein] + ATP = O-phospho-L-seryl-[protein] + ADP + H(+). The enzyme catalyses L-threonyl-[protein] + ATP = O-phospho-L-threonyl-[protein] + ADP + H(+). In terms of biological role, serine/threonine-protein kinase which is required in the germline to positively regulate lifespan. May play a role in body wall muscle contraction. May be involved in embryonic cytokinesis. The chain is MAP kinase-interacting serine/threonine-protein kinase mnk-1 from Caenorhabditis elegans.